Consider the following 393-residue polypeptide: Protein TsgA (393 aa).

The next 12 helical transmembrane spans lie at 11 to 31 (WISFLSYALTGALVIVTGMVM), 51 to 71 (FLNAGILISIFLNAWLMEIVP), 78 to 98 (FGFLLMVLAVAGLMFSHSLAL), 101 to 121 (TAMFILGVVSGITMSIGTFLI), 134 to 154 (LLFTDSFFSMAGMIFPMIAAF), 162 to 182 (WYWVYACIGLVYVAIFILTFG), 206 to 226 (IGVLFLSVAALCYILGQLGFI), 245 to 265 (TLVSNFWMSYMVGMWAFSFIL), 273 to 293 (ILTVLAGLAAILMYVFNTGTP), 297 to 317 (AWSILALGFFSSAIYTTIITL), 332 to 352 (FVLTCGTIGTMLTFVVTGPIV), and 361 to 381 (LLTANGLYAVVFVMCFLLGFV).

This sequence belongs to the major facilitator superfamily. TsgA family.

It is found in the cell inner membrane. The polypeptide is Protein TsgA (Shigella boydii serotype 4 (strain Sb227)).